We begin with the raw amino-acid sequence, 735 residues long: Phosphoribosylformylglycinamidine synthase subunit PurL (735 aa).

Residue H44 is part of the active site. ATP contacts are provided by Y47 and K86. E88 provides a ligand contact to Mg(2+). Substrate is bound by residues 89–92 and R111; that span reads SHNH. Catalysis depends on H90, which acts as the Proton acceptor. Mg(2+) is bound at residue D112. Q240 lines the substrate pocket. D268 provides a ligand contact to Mg(2+). 312–314 is a substrate binding site; sequence ESQ. The ATP site is built by D496 and G533. N534 provides a ligand contact to Mg(2+). Position 536 (S536) interacts with substrate.

Belongs to the FGAMS family. In terms of assembly, monomer. Part of the FGAM synthase complex composed of 1 PurL, 1 PurQ and 2 PurS subunits.

Its subcellular location is the cytoplasm. It catalyses the reaction N(2)-formyl-N(1)-(5-phospho-beta-D-ribosyl)glycinamide + L-glutamine + ATP + H2O = 2-formamido-N(1)-(5-O-phospho-beta-D-ribosyl)acetamidine + L-glutamate + ADP + phosphate + H(+). It participates in purine metabolism; IMP biosynthesis via de novo pathway; 5-amino-1-(5-phospho-D-ribosyl)imidazole from N(2)-formyl-N(1)-(5-phospho-D-ribosyl)glycinamide: step 1/2. Functionally, part of the phosphoribosylformylglycinamidine synthase complex involved in the purines biosynthetic pathway. Catalyzes the ATP-dependent conversion of formylglycinamide ribonucleotide (FGAR) and glutamine to yield formylglycinamidine ribonucleotide (FGAM) and glutamate. The FGAM synthase complex is composed of three subunits. PurQ produces an ammonia molecule by converting glutamine to glutamate. PurL transfers the ammonia molecule to FGAR to form FGAM in an ATP-dependent manner. PurS interacts with PurQ and PurL and is thought to assist in the transfer of the ammonia molecule from PurQ to PurL. The protein is Phosphoribosylformylglycinamidine synthase subunit PurL of Nitratiruptor sp. (strain SB155-2).